Reading from the N-terminus, the 344-residue chain is Glycerol-3-phosphate dehydrogenase [NAD(P)+] (344 aa).

S11, W12, H32, R33, and K105 together coordinate NADPH. Sn-glycerol 3-phosphate is bound by residues K105, G135, and S137. A139 provides a ligand contact to NADPH. Sn-glycerol 3-phosphate contacts are provided by K190, D243, S253, R254, and N255. K190 functions as the Proton acceptor in the catalytic mechanism. R254 lines the NADPH pocket. Residues V278 and E280 each coordinate NADPH.

The protein belongs to the NAD-dependent glycerol-3-phosphate dehydrogenase family.

It is found in the cytoplasm. It carries out the reaction sn-glycerol 3-phosphate + NAD(+) = dihydroxyacetone phosphate + NADH + H(+). It catalyses the reaction sn-glycerol 3-phosphate + NADP(+) = dihydroxyacetone phosphate + NADPH + H(+). Its pathway is membrane lipid metabolism; glycerophospholipid metabolism. Functionally, catalyzes the reduction of the glycolytic intermediate dihydroxyacetone phosphate (DHAP) to sn-glycerol 3-phosphate (G3P), the key precursor for phospholipid synthesis. The protein is Glycerol-3-phosphate dehydrogenase [NAD(P)+] of Oceanobacillus iheyensis (strain DSM 14371 / CIP 107618 / JCM 11309 / KCTC 3954 / HTE831).